Reading from the N-terminus, the 145-residue chain is Lysozyme-like protein 4 (145 aa).

Residues 1–19 (MKASVVLSLIGYLVVPSDT) form the signal peptide. Positions 20–145 (AVLGRCVVAK…LARWLDGCKL (126 aa)) constitute a C-type lysozyme domain. Disulfide bonds link Cys25-Cys143, Cys49-Cys130, Cys84-Cys95, and Cys91-Cys109. Residue Glu54 is part of the active site.

Belongs to the glycosyl hydrolase 22 family. Monomer.

Its subcellular location is the secreted. The protein localises to the cytoplasmic vesicle. It localises to the secretory vesicle. It is found in the acrosome. The protein resides in the cell projection. Its subcellular location is the cilium. The protein localises to the flagellum. May be involved in fertilization. Has no detectable bacteriolytic and lysozyme activities in vitro. This chain is Lysozyme-like protein 4 (LYZL4), found in Bos taurus (Bovine).